Consider the following 265-residue polypeptide: Putative N(omega)-hydroxy-L-arginine synthase DcsA (265 aa).

This sequence belongs to the DcsA family. Heme is required as a cofactor.

In terms of biological role, involved in the biosynthesis of the antibiotic D-cycloserine (DCS), a cyclic structural analog of D-alanine, used as an antitubercular agent. Could catalyze the production of N(omega)-hydroxy-L-arginine (NHA) from L-arginine. This is Putative N(omega)-hydroxy-L-arginine synthase DcsA from Streptomyces lavendulae.